The primary structure comprises 95 residues: SMAD5 antisense gene protein 1 (95 aa).

Disordered regions lie at residues 1 to 24 (MHKQPKLLPPPATPPPPPQSSSWS) and 43 to 70 (SSPTGLPKPHSPMPSPPEPEHSVGKPAN). A compositionally biased stretch (pro residues) spans 7–19 (LLPPPATPPPPPQ).

As to expression, expressed in fetal tissues.

In Homo sapiens (Human), this protein is SMAD5 antisense gene protein 1 (SMAD5-AS1).